Consider the following 137-residue polypeptide: Large ribosomal subunit protein uL16 (137 aa).

The protein belongs to the universal ribosomal protein uL16 family. Part of the 50S ribosomal subunit.

Functionally, binds 23S rRNA and is also seen to make contacts with the A and possibly P site tRNAs. The sequence is that of Large ribosomal subunit protein uL16 from Psychrobacter cryohalolentis (strain ATCC BAA-1226 / DSM 17306 / VKM B-2378 / K5).